The primary structure comprises 889 residues: Cytoplasmic aconitate hydratase (889 aa).

Residues glutamine 86 and 205 to 207 (DSH) contribute to the substrate site. [4Fe-4S] cluster contacts are provided by cysteine 437, cysteine 503, and cysteine 506. Substrate-binding positions include arginine 536, arginine 541, arginine 699, and 779–780 (SR).

This sequence belongs to the aconitase/IPM isomerase family. As to quaternary structure, interacts (when associated with the 4Fe-4S) with FBXL5. Interacts with frataxin(81-210). The cofactor is [4Fe-4S] cluster.

It localises to the cytoplasm. The protein localises to the cytosol. The catalysed reaction is citrate = D-threo-isocitrate. Its function is as follows. Bifunctional iron sensor that switches between 2 activities depending on iron availability. Iron deprivation, promotes its mRNA binding activity through which it regulates the expression of genes involved in iron uptake, sequestration and utilization. Binds to iron-responsive elements (IRES) in the untranslated region of target mRNAs preventing for instance the translation of ferritin and aminolevulinic acid synthase and stabilizing the transferrin receptor mRNA. Conversely, when cellular iron levels are high, binds a 4Fe-4S cluster which precludes RNA binding activity and promotes the aconitase activity, the isomerization of citrate to isocitrate via cis-aconitate. The chain is Cytoplasmic aconitate hydratase (Aco1) from Mus musculus (Mouse).